We begin with the raw amino-acid sequence, 732 residues long: Iron-sulfur clusters transporter ATM1, mitochondrial (732 aa).

The transit peptide at 1 to 55 directs the protein to the mitochondrion; the sequence is MGFGSCSRHALFTPAAFSGSFTTMTTSCFKRVYTAQIHGGDALGKRLPSVSSFSG. The Mitochondrial matrix portion of the chain corresponds to 56–143; the sequence is QLPRHGLHRQ…KNNPNVKFRV (88 aa). A disordered region spans residues 71–114; sequence STSHRRQTSPPPSPRTTSQSPTVPSKASTTPPTSLNTSKPIATE. Residues 85 to 95 show a composition bias toward low complexity; that stretch reads RTTSQSPTVPS. Residues 96–114 show a composition bias toward polar residues; that stretch reads KASTTPPTSLNTSKPIATE. A helical transmembrane segment spans residues 144 to 164; it reads IGALTLLVAGKVLNVQVPFFF. In terms of domain architecture, ABC transmembrane type-1 spans 144–432; that stretch reads IGALTLLVAG…LGTVYRELRQ (289 aa). The Mitochondrial intermembrane segment spans residues 165–181; that stretch reads KTIVDSLNVPITESTTV. Residues 182 to 202 form a helical membrane-spanning segment; sequence WVLAGASIAGYGAARILTTLF. The Mitochondrial matrix portion of the chain corresponds to 203–262; that stretch reads GELRNAVFASVAQNAIRKVARETFEHLLNMDMKFHLERQTGGLTRAIDRGTKGISFILSS. The helical transmembrane segment at 263 to 283 threads the bilayer; sequence IVFHVIPTALEISMVCGILSW. A topological domain (mitochondrial intermembrane) is located at residue Lys-284. The chain crosses the membrane as a helical span at residues 285–305; it reads FGWDFAAVTAITMLLYTWFTI. Residues 306–378 lie on the Mitochondrial matrix side of the membrane; it reads KTTAWRTTFR…SLAALNSGQN (73 aa). Glutathione-binding positions include 311–315 and 374–377; these read RTTFR and NSGQ. Residues 379-399 traverse the membrane as a helical segment; it reads FIFSSALTMMMLLGAQGIVKG. The Mitochondrial intermembrane segment spans residues 400–405; sequence TMTVGD. Residues 406–426 form a helical membrane-spanning segment; it reads LVLVNQLVFQLSLPLNFLGTV. Position 424 (Gly-424) interacts with glutathione. Residues 427 to 732 lie on the Mitochondrial matrix side of the membrane; the sequence is YRELRQSLID…LEVVDEKKKQ (306 aa). An ABC transporter domain is found at 466-702; it reads IEFRNVAFAY…PGGVYHRLWQ (237 aa). Residues Tyr-475 and 499–506 contribute to the ATP site; that span reads GPSGCGKS. Residues 708-732 form a disordered region; that stretch reads STQPTDEEIERQREELEVVDEKKKQ. The span at 717–732 shows a compositional bias: basic and acidic residues; that stretch reads ERQREELEVVDEKKKQ.

Belongs to the ABC transporter superfamily. ABCB family. Heavy Metal importer (TC 3.A.1.210) subfamily. Homodimer.

The protein localises to the mitochondrion inner membrane. Functionally, performs an essential function in the generation of cytoplasmic iron-sulfur proteins by mediating the ATP-dependent export of mitochondrial Fe/S cluster precursors synthesized by NFS1 and other mitochondrial proteins. Hydrolyzes ATP. Binds glutathione and may function by transporting a glutathione-conjugated iron-sulfur compound. Plays a role during copper stress, in a manner dependent on the copper metalloregulatory transcription factor CUF1. This chain is Iron-sulfur clusters transporter ATM1, mitochondrial, found in Cryptococcus neoformans var. grubii serotype A (strain H99 / ATCC 208821 / CBS 10515 / FGSC 9487) (Filobasidiella neoformans var. grubii).